A 146-amino-acid polypeptide reads, in one-letter code: 3-dehydroquinate dehydratase (146 aa).

Tyr-23 functions as the Proton acceptor in the catalytic mechanism. Residues Asn-79, His-85, and Asp-92 each coordinate substrate. His-105 (proton donor) is an active-site residue. Residues 106–107 (IS) and Arg-116 each bind substrate.

This sequence belongs to the type-II 3-dehydroquinase family. As to quaternary structure, homododecamer.

The catalysed reaction is 3-dehydroquinate = 3-dehydroshikimate + H2O. The protein operates within metabolic intermediate biosynthesis; chorismate biosynthesis; chorismate from D-erythrose 4-phosphate and phosphoenolpyruvate: step 3/7. In terms of biological role, catalyzes a trans-dehydration via an enolate intermediate. In Variovorax paradoxus (strain S110), this protein is 3-dehydroquinate dehydratase.